We begin with the raw amino-acid sequence, 360 residues long: Glutamate 5-kinase (360 aa).

Lys7 is an ATP binding site. Ser47, Asp134, and Asn146 together coordinate substrate. ATP-binding positions include 166–167 (TD) and 208–214 (TGGIKTK). One can recognise a PUA domain in the interval 273–344 (VGEIHLDDGA…IGINSRSETT (72 aa)).

It belongs to the glutamate 5-kinase family.

It is found in the cytoplasm. The catalysed reaction is L-glutamate + ATP = L-glutamyl 5-phosphate + ADP. It functions in the pathway amino-acid biosynthesis; L-proline biosynthesis; L-glutamate 5-semialdehyde from L-glutamate: step 1/2. Its function is as follows. Catalyzes the transfer of a phosphate group to glutamate to form L-glutamate 5-phosphate. The polypeptide is Glutamate 5-kinase (Prochlorococcus marinus (strain NATL2A)).